Reading from the N-terminus, the 166-residue chain is Cofilin-1 (166 aa).

The residue at position 2 (Ala-2) is an N-acetylalanine. Residues Ser-3 and Ser-8 each carry the phosphoserine modification. In terms of domain architecture, ADF-H spans 4–153; it reads GVAVSDGVIK…KDRCTLAEKL (150 aa). Position 13 is an N6-acetyllysine (Lys-13). Thr-25 carries the post-translational modification Phosphothreonine. Residues 30–34 carry the Nuclear localization signal motif; the sequence is KKRKK. Ser-41 carries the post-translational modification Phosphoserine. Residue Tyr-68 is modified to Phosphotyrosine. At Lys-73 the chain carries N6-acetyllysine. Lys-132 participates in a covalent cross-link: Glycyl lysine isopeptide (Lys-Gly) (interchain with G-Cter in SUMO2). At Tyr-140 the chain carries Phosphotyrosine. Residue Lys-144 is modified to N6-acetyllysine. Ser-156 bears the Phosphoserine mark.

The protein belongs to the actin-binding proteins ADF family. Can bind G- and F-actin in a 1:1 ratio of cofilin to actin. It is a major component of intranuclear and cytoplasmic actin rods. Interacts with the subcortical maternal complex (SCMC) via interaction with TLE6 and NLRP5. Interacts with C9orf72. Inactivated by phosphorylation on Ser-3. Phosphorylated on Ser-3 in resting cells. Dephosphorylated by PDXP/chronophin; this restores its activity in promoting actin filament depolymerization. The phosphorylation of Ser-24 may prevent recognition of the nuclear localization signal. Phosphorylated via a ARRB1-RAC1-LIMK1-PAK1 cascade upon active ligand stimulation of atypical chemokine receptor ACKR2.

It is found in the nucleus matrix. It localises to the cytoplasm. Its subcellular location is the cytoskeleton. The protein resides in the cell projection. The protein localises to the ruffle membrane. It is found in the lamellipodium membrane. It localises to the lamellipodium. Its subcellular location is the growth cone. The protein resides in the axon. Functionally, binds to F-actin and exhibits pH-sensitive F-actin depolymerizing activity. Important for normal progress through mitosis and normal cytokinesis. In conjunction with the subcortical maternal complex (SCMC), plays an essential role for zygotes to progress beyond the first embryonic cell divisions via regulation of actin dynamics. Required for the centralization of the mitotic spindle and symmetric division of zygotes. Plays a role in the regulation of cell morphology and cytoskeletal organization in epithelial cells. Required for the up-regulation of atypical chemokine receptor ACKR2 from endosomal compartment to cell membrane, increasing its efficiency in chemokine uptake and degradation. Required for neural tube morphogenesis and neural crest cell migration. This chain is Cofilin-1 (Cfl1), found in Rattus norvegicus (Rat).